The chain runs to 283 residues: 4-hydroxy-3-methylbut-2-enyl diphosphate reductase (283 aa).

C12 is a [4Fe-4S] cluster binding site. (2E)-4-hydroxy-3-methylbut-2-enyl diphosphate-binding residues include H40 and H72. Residues H40 and H72 each contribute to the dimethylallyl diphosphate site. H40 and H72 together coordinate isopentenyl diphosphate. C94 is a [4Fe-4S] cluster binding site. H122 lines the (2E)-4-hydroxy-3-methylbut-2-enyl diphosphate pocket. H122 contacts dimethylallyl diphosphate. H122 is a binding site for isopentenyl diphosphate. E124 serves as the catalytic Proton donor. T160 lines the (2E)-4-hydroxy-3-methylbut-2-enyl diphosphate pocket. C188 provides a ligand contact to [4Fe-4S] cluster. Residues S216, N218, and S259 each contribute to the (2E)-4-hydroxy-3-methylbut-2-enyl diphosphate site. 3 residues coordinate dimethylallyl diphosphate: S216, N218, and S259. The isopentenyl diphosphate site is built by S216, N218, and S259.

The protein belongs to the IspH family. It depends on [4Fe-4S] cluster as a cofactor.

It carries out the reaction isopentenyl diphosphate + 2 oxidized [2Fe-2S]-[ferredoxin] + H2O = (2E)-4-hydroxy-3-methylbut-2-enyl diphosphate + 2 reduced [2Fe-2S]-[ferredoxin] + 2 H(+). The catalysed reaction is dimethylallyl diphosphate + 2 oxidized [2Fe-2S]-[ferredoxin] + H2O = (2E)-4-hydroxy-3-methylbut-2-enyl diphosphate + 2 reduced [2Fe-2S]-[ferredoxin] + 2 H(+). It functions in the pathway isoprenoid biosynthesis; dimethylallyl diphosphate biosynthesis; dimethylallyl diphosphate from (2E)-4-hydroxy-3-methylbutenyl diphosphate: step 1/1. Its pathway is isoprenoid biosynthesis; isopentenyl diphosphate biosynthesis via DXP pathway; isopentenyl diphosphate from 1-deoxy-D-xylulose 5-phosphate: step 6/6. In terms of biological role, catalyzes the conversion of 1-hydroxy-2-methyl-2-(E)-butenyl 4-diphosphate (HMBPP) into a mixture of isopentenyl diphosphate (IPP) and dimethylallyl diphosphate (DMAPP). Acts in the terminal step of the DOXP/MEP pathway for isoprenoid precursor biosynthesis. The polypeptide is 4-hydroxy-3-methylbut-2-enyl diphosphate reductase (Dictyoglomus turgidum (strain DSM 6724 / Z-1310)).